Reading from the N-terminus, the 135-residue chain is Protein PsiE homolog (135 aa).

4 helical membrane-spanning segments follow: residues 20-40 (VGLI…TFHL), 54-74 (YMLI…ALIV), 82-102 (HFPL…LIIV), and 107-127 (PIDT…LYLA).

Belongs to the PsiE family.

Its subcellular location is the cell inner membrane. The chain is Protein PsiE homolog from Yersinia enterocolitica serotype O:8 / biotype 1B (strain NCTC 13174 / 8081).